Consider the following 196-residue polypeptide: Sesquiterpene phosphatase astK (196 aa).

It belongs to the HAD-like hydrolase superfamily.

The catalysed reaction is (S,S)-drim-8-en-11-yl phosphate + H2O = (S,S)-drim-8-en-11-ol + phosphate. The protein operates within secondary metabolite biosynthesis; terpenoid biosynthesis. Sesquiterpene phosphatase; part of the gene cluster that mediates the biosynthesis of astellolides, drimane-type sesquiterpene esters that show antimicrobial, anti-inflammatory, and anti-tumor activities. The first step in astellolide biosynthesis is performed by the sesquiterpene cyclase astC that catalyzes the formation of drimanyl pyrophosphate from farnesyl pyrophosphate. Drimanyl pyrophosphate is then dephosphorylated by the sesquiterpene phosphatase astI to produce drimanyl monophosphate which is further dephosphorylated to drim-8-ene-11-ol by atsK. Drim-8-ene-11-ol is converted to confertifolin, probably by the cytochrome P450 monooxygenase astD and/or the dehydrogenase astE. The cytochrome P450 monooxygenases astB, astF and astJ then hydroxylate confertifolin at C6, C14, or C15 to form trihydroxy confertifolin. The nonribosomal peptide synthetase astA catalyzes ester bond formation between trihydroxy contifolin and benzoic acid (BA) or 4-hydroxy benzoic acid (4HBA), leading to the formation of dideacetyl astellolides A and B, respectively. Finally, the O-acetyltransferase astG converts dideacetyl astellolides A and B into deacetyl astellolides A and B. The protein is Sesquiterpene phosphatase astK of Aspergillus oryzae (strain ATCC 42149 / RIB 40) (Yellow koji mold).